A 553-amino-acid chain; its full sequence is Putative transport protein YidE (553 aa).

Helical transmembrane passes span 4 to 24, 28 to 48, 65 to 85, 95 to 115, and 158 to 178; these read IALT…IGNV, GIGL…HFVS, FGLI…FFAS, LFAV…HKLF, and MSYA…MWML. RCK C-terminal domains follow at residues 191–276 and 279–361; these read QQHE…VIGQ and DTSL…VLGN. 6 consecutive transmembrane segments (helical) span residues 371 to 391, 393 to 413, 439 to 459, 464 to 484, 493 to 513, and 533 to 553; these read MLPV…PVFV, GFPA…ALIL, IVLF…NTLV, LSWI…VGIL, YLTM…LAFA, and LVMF…WSIG.

This sequence belongs to the AAE transporter (TC 2.A.81) family. YidE subfamily.

The protein localises to the cell membrane. This is Putative transport protein YidE from Shigella boydii serotype 4 (strain Sb227).